A 185-amino-acid polypeptide reads, in one-letter code: Ribosome-recycling factor (185 aa).

The interval 136–155 (NDDLKKLEKNGDITEDELRA) is disordered.

This sequence belongs to the RRF family.

The protein resides in the cytoplasm. Responsible for the release of ribosomes from messenger RNA at the termination of protein biosynthesis. May increase the efficiency of translation by recycling ribosomes from one round of translation to another. The sequence is that of Ribosome-recycling factor from Bacillus velezensis (strain DSM 23117 / BGSC 10A6 / LMG 26770 / FZB42) (Bacillus amyloliquefaciens subsp. plantarum).